The primary structure comprises 172 residues: Acidic proline-rich protein PRP25 (172 aa).

Positions 1 to 16 (MLVVLFTAVLLTLSYA) are cleaved as a signal peptide. The tract at residues 22-172 (ELQILDQTPN…QQGPPPPGGP (151 aa)) is disordered. Over residues 32-44 (QKPPPPGFPPRPP) the composition is skewed to pro residues. Residues 57–67 (GPQQSPLQPGK) are compositionally biased toward low complexity. Composition is skewed to pro residues over residues 68–137 (PQDP…PQQK) and 145–172 (QGPPPPGGPQQKPPQPGNQQGPPPPGGP).

The protein localises to the secreted. In Rattus norvegicus (Rat), this protein is Acidic proline-rich protein PRP25.